A 316-amino-acid chain; its full sequence is Type II restriction enzyme BsuBI (316 aa).

This sequence belongs to the BsuBI/PstI type II restriction endonuclease family. As to quaternary structure, homodimer. Requires Mg(2+) as cofactor.

The catalysed reaction is Endonucleolytic cleavage of DNA to give specific double-stranded fragments with terminal 5'-phosphates.. In terms of biological role, a P subtype restriction enzyme that recognizes the double-stranded sequence 5'-CTGCAG-3' and cleaves after A-5. The sequence is that of Type II restriction enzyme BsuBI (hsdBR) from Bacillus subtilis.